Reading from the N-terminus, the 601-residue chain is Elongation factor 4 (601 aa).

In terms of domain architecture, tr-type G spans Glu-6 to Glu-188. Residues Asp-18–Thr-23 and Asn-135–Asp-138 contribute to the GTP site.

The protein belongs to the TRAFAC class translation factor GTPase superfamily. Classic translation factor GTPase family. LepA subfamily.

Its subcellular location is the cell inner membrane. The catalysed reaction is GTP + H2O = GDP + phosphate + H(+). Functionally, required for accurate and efficient protein synthesis under certain stress conditions. May act as a fidelity factor of the translation reaction, by catalyzing a one-codon backward translocation of tRNAs on improperly translocated ribosomes. Back-translocation proceeds from a post-translocation (POST) complex to a pre-translocation (PRE) complex, thus giving elongation factor G a second chance to translocate the tRNAs correctly. Binds to ribosomes in a GTP-dependent manner. The chain is Elongation factor 4 from Hydrogenovibrio crunogenus (strain DSM 25203 / XCL-2) (Thiomicrospira crunogena).